A 528-amino-acid chain; its full sequence is Nucleobase-ascorbate transporter 5 (528 aa).

The segment at 1-20 (MSAPKSGGDPLPHPPKEQLP) is disordered. The next 12 helical transmembrane spans lie at 35–55 (AVLL…LIPS), 71–91 (LIQT…VFGT), 93–113 (LPAV…IMLS), 133–153 (TQGA…SGLW), 159–179 (FLSP…LYEL), 181–201 (FPGV…LILI), 219–239 (FAVI…TLGG), 285–305 (FAMM…FIAV), 367–387 (AGFM…ASIP), 390–410 (IIAA…LSLL), 418–438 (FRTL…PQYF), and 460–479 (MVNV…AYLL).

This sequence belongs to the nucleobase:cation symporter-2 (NCS2) (TC 2.A.40) family. As to expression, weakly expressed in the vasculature of developing leaves.

Its subcellular location is the membrane. This Arabidopsis thaliana (Mouse-ear cress) protein is Nucleobase-ascorbate transporter 5 (NAT5).